Reading from the N-terminus, the 276-residue chain is Malonyl-[acyl-carrier protein] O-methyltransferase (276 aa).

It belongs to the methyltransferase superfamily.

It carries out the reaction malonyl-[ACP] + S-adenosyl-L-methionine = malonyl-[ACP] methyl ester + S-adenosyl-L-homocysteine. It participates in cofactor biosynthesis; biotin biosynthesis. Converts the free carboxyl group of a malonyl-thioester to its methyl ester by transfer of a methyl group from S-adenosyl-L-methionine (SAM). It allows to synthesize pimeloyl-ACP via the fatty acid synthetic pathway. This Paenibacillus sp. (strain JDR-2) protein is Malonyl-[acyl-carrier protein] O-methyltransferase.